We begin with the raw amino-acid sequence, 207 residues long: Ankyrin repeat-containing protein P1E11.10 (207 aa).

ANK repeat units lie at residues 36–65 (NGYT…DINI) and 69–98 (DGET…TVKN).

It localises to the cytoplasm. It is found in the nucleus. In Schizosaccharomyces pombe (strain 972 / ATCC 24843) (Fission yeast), this protein is Ankyrin repeat-containing protein P1E11.10.